The primary structure comprises 430 residues: Tol-Pal system protein TolB (430 aa).

Positions 1-21 (MKQALRVAFGFLMLWAAVLHA) are cleaved as a signal peptide.

Belongs to the TolB family. As to quaternary structure, the Tol-Pal system is composed of five core proteins: the inner membrane proteins TolA, TolQ and TolR, the periplasmic protein TolB and the outer membrane protein Pal. They form a network linking the inner and outer membranes and the peptidoglycan layer.

It localises to the periplasm. Part of the Tol-Pal system, which plays a role in outer membrane invagination during cell division and is important for maintaining outer membrane integrity. TolB occupies a key intermediary position in the Tol-Pal system because it communicates directly with both membrane-embedded components, Pal in the outer membrane and TolA in the inner membrane. In Salmonella enteritidis PT4 (strain P125109), this protein is Tol-Pal system protein TolB.